The primary structure comprises 193 residues: MAATTLSIATTIRSSSFSSGLASAHHFPSRPLSIEFPFSFGVSSSSTLSHRAIYLHPISAVKTPKKIKKIGSEISSLTLEESRILVDYVQDKFGVSILFSAPAAAALPPPLDNGGATASVERQTTFDVVINDVPRGNRIAVITAIRAMTSLSLSESKELIEGFPKKFKEGVTKDEAEEDKTQLEEAGAKVSIV.

Residues 1–59 (MAATTLSIATTIRSSSFSSGLASAHHFPSRPLSIEFPFSFGVSSSSTLSHRAIYLHPIS) constitute a chloroplast transit peptide. The segment covering 170–187 (GVTKDEAEEDKTQLEEAG) has biased composition (basic and acidic residues). A disordered region spans residues 170-193 (GVTKDEAEEDKTQLEEAGAKVSIV).

Belongs to the bacterial ribosomal protein bL12 family.

It is found in the plastid. It localises to the chloroplast. The polypeptide is Large ribosomal subunit protein bL12cy (RPL12B) (Arabidopsis thaliana (Mouse-ear cress)).